The sequence spans 351 residues: Sulfate/thiosulfate import ATP-binding protein CysA (351 aa).

One can recognise an ABC transporter domain in the interval 3–237; that stretch reads ITVRNLHKRF…PRSAFVYEFL (235 aa). 35-42 is a binding site for ATP; sequence GPSGCGKT.

Belongs to the ABC transporter superfamily. Sulfate/tungstate importer (TC 3.A.1.6) family. The complex is composed of two ATP-binding proteins (CysA), two transmembrane proteins (CysT and CysW) and a solute-binding protein (CysP).

It is found in the cell inner membrane. The enzyme catalyses sulfate(out) + ATP + H2O = sulfate(in) + ADP + phosphate + H(+). The catalysed reaction is thiosulfate(out) + ATP + H2O = thiosulfate(in) + ADP + phosphate + H(+). Part of the ABC transporter complex CysAWTP involved in sulfate/thiosulfate import. Responsible for energy coupling to the transport system. This is Sulfate/thiosulfate import ATP-binding protein CysA from Burkholderia mallei (strain ATCC 23344).